The sequence spans 205 residues: Pyridoxal 5'-phosphate synthase subunit PdxT (205 aa).

Residue 54 to 56 (GES) participates in L-glutamine binding. Cysteine 86 (nucleophile) is an active-site residue. L-glutamine is bound by residues arginine 118 and 147-148 (IR). Active-site charge relay system residues include histidine 183 and glutamate 185.

It belongs to the glutaminase PdxT/SNO family. In terms of assembly, in the presence of PdxS, forms a dodecamer of heterodimers. Only shows activity in the heterodimer.

The enzyme catalyses aldehydo-D-ribose 5-phosphate + D-glyceraldehyde 3-phosphate + L-glutamine = pyridoxal 5'-phosphate + L-glutamate + phosphate + 3 H2O + H(+). It carries out the reaction L-glutamine + H2O = L-glutamate + NH4(+). The protein operates within cofactor biosynthesis; pyridoxal 5'-phosphate biosynthesis. Catalyzes the hydrolysis of glutamine to glutamate and ammonia as part of the biosynthesis of pyridoxal 5'-phosphate. The resulting ammonia molecule is channeled to the active site of PdxS. The protein is Pyridoxal 5'-phosphate synthase subunit PdxT of Nitrosopumilus maritimus (strain SCM1).